A 130-amino-acid polypeptide reads, in one-letter code: Large ribosomal subunit protein eL22 (130 aa).

Positions 1-21 are disordered; sequence MPGKTAQKGGRPSGKGKKKKQ. Residues 17–20 carry the Nuclear localization signal motif; it reads KKKK.

The protein belongs to the eukaryotic ribosomal protein eL22 family.

The protein is Large ribosomal subunit protein eL22 (RPL22) of Tripneustes gratilla (Hawaian sea urchin).